Reading from the N-terminus, the 109-residue chain is MNSLIPLLVEASTYIVRGESSISIAIGIGPQASRSVPYHILCRGCDGTVTTFRTWHTQPLGPCNTIIIGRKGNETTGGAEQRRQQHLTSDSATKASLVGFCGLYYYFRK.

This is an uncharacterized protein from Saccharomyces cerevisiae (strain ATCC 204508 / S288c) (Baker's yeast).